Consider the following 494-residue polypeptide: V-type proton ATPase subunit B (494 aa).

Belongs to the ATPase alpha/beta chains family. As to quaternary structure, V-ATPase is a heteromultimeric enzyme composed of a peripheral catalytic V1 complex (main components: subunits A, B, C, D, E, and F) attached to an integral membrane V0 proton pore complex (main component: the proteolipid protein).

In terms of biological role, non-catalytic subunit of the peripheral V1 complex of vacuolar ATPase. V-ATPase is responsible for acidifying a variety of intracellular compartments in eukaryotic cells. This Plasmodium falciparum protein is V-type proton ATPase subunit B (VAPB).